Here is a 243-residue protein sequence, read N- to C-terminus: DNA repair protein RecO (243 aa).

The protein belongs to the RecO family.

Functionally, involved in DNA repair and RecF pathway recombination. In Caulobacter sp. (strain K31), this protein is DNA repair protein RecO.